We begin with the raw amino-acid sequence, 353 residues long: Dihydroorotate dehydrogenase (quinone) (353 aa).

Residues 67–71 (AGFDK) and Thr-91 each bind FMN. Position 71 (Lys-71) interacts with substrate. 116 to 120 (NRMGF) lines the substrate pocket. Residues Asn-144 and Asn-177 each contribute to the FMN site. Position 177 (Asn-177) interacts with substrate. Ser-180 serves as the catalytic Nucleophile. Asn-182 lines the substrate pocket. FMN is bound by residues Lys-213 and Thr-241. 242 to 243 (NT) contributes to the substrate binding site. FMN is bound by residues Gly-265, Gly-294, and 315–316 (YT).

The protein belongs to the dihydroorotate dehydrogenase family. Type 2 subfamily. Monomer. It depends on FMN as a cofactor.

Its subcellular location is the cell membrane. It carries out the reaction (S)-dihydroorotate + a quinone = orotate + a quinol. The protein operates within pyrimidine metabolism; UMP biosynthesis via de novo pathway; orotate from (S)-dihydroorotate (quinone route): step 1/1. Catalyzes the conversion of dihydroorotate to orotate with quinone as electron acceptor. The polypeptide is Dihydroorotate dehydrogenase (quinone) (Mycobacteroides abscessus (strain ATCC 19977 / DSM 44196 / CCUG 20993 / CIP 104536 / JCM 13569 / NCTC 13031 / TMC 1543 / L948) (Mycobacterium abscessus)).